We begin with the raw amino-acid sequence, 269 residues long: Malonyl-[acyl-carrier protein] O-methyltransferase (269 aa).

The protein belongs to the methyltransferase superfamily.

It catalyses the reaction malonyl-[ACP] + S-adenosyl-L-methionine = malonyl-[ACP] methyl ester + S-adenosyl-L-homocysteine. The protein operates within cofactor biosynthesis; biotin biosynthesis. In terms of biological role, converts the free carboxyl group of a malonyl-thioester to its methyl ester by transfer of a methyl group from S-adenosyl-L-methionine (SAM). It allows to synthesize pimeloyl-ACP via the fatty acid synthetic pathway. The chain is Malonyl-[acyl-carrier protein] O-methyltransferase from Bacillus cereus (strain ATCC 14579 / DSM 31 / CCUG 7414 / JCM 2152 / NBRC 15305 / NCIMB 9373 / NCTC 2599 / NRRL B-3711).